We begin with the raw amino-acid sequence, 293 residues long: 2-pyrone-4,6-dicarboxylate hydrolase (293 aa).

Positions 1–20 are disordered; that stretch reads MTNDERILSWNETPSKPRYT. Substrate-binding positions include 29–31, Y47, S75, R122, R128, Y154, and H178; that span reads HCH. D246 (proton acceptor) is an active-site residue. N251 lines the substrate pocket.

Belongs to the metallo-dependent hydrolases superfamily. PDC hydrolase family. In terms of assembly, monomer.

It carries out the reaction 2-oxo-2H-pyran-4,6-dicarboxylate + H2O = (1E)-4-oxobut-1-ene-1,2,4-tricarboxylate + H(+). Its pathway is secondary metabolite metabolism; lignin degradation. Its activity is regulated as follows. Strongly inhibited by 1 mM Zn(2+) ions. Also inhibited by pyridine-2,4-dicarboxylic acid, 5-hydroxyisophthalic acid and 5,5'-dithiobis(2-nitrobenzoic acid) (Ellman reagent). Functionally, contributes to the degradation of lignin at the level of the protocatechuate 4,5-cleavage pathway. Catalyzes the hydrolysis of 2-pyrone-4,6-dicarboxylate (PDC) to (4E)-oxalomesaconate (OMA). The keto form of OMA can tautomerize into the enol form, 4-carboxy-2-hydroxymuconate (CHM), under certain pH conditions. Also catalyzes the reverse reaction. Is essential for the growth of Sphingobium sp. SYK-6 on vanillate but is not responsible for the growth of this strain on syringate. In Sphingobium sp. (strain NBRC 103272 / SYK-6), this protein is 2-pyrone-4,6-dicarboxylate hydrolase.